We begin with the raw amino-acid sequence, 615 residues long: Nuclear cap-binding protein subunit 3 (615 aa).

Lys-12 is covalently cross-linked (Glycyl lysine isopeptide (Lys-Gly) (interchain with G-Cter in SUMO2)). Residues 15–27 are compositionally biased toward low complexity; the sequence is APAGPALGLPSPE. The interval 15–43 is disordered; that stretch reads APAGPALGLPSPEVESGLERGEPEPMEVE. Ser-25 is subject to Phosphoserine. A Glycyl lysine isopeptide (Lys-Gly) (interchain with G-Cter in SUMO2) cross-link involves residue Lys-70. At Ser-73 the chain carries Phosphoserine. The tract at residues 126-187 is RNA recognition motif (RRM) domain; it reads ETIYICGVDE…MSSLPAQDKM (62 aa). The WLDD motif; essential for 7-methylguanosine-containing mRNA cap binding motif lies at 155–158; that stretch reads WLDD. 2 disordered regions span residues 182–233 and 332–400; these read PAQD…LDTL and HSGL…MDYD. Over residues 185–208 the composition is skewed to basic and acidic residues; that stretch reads DKMRSRDASEDKSSEKNKKDKQED. A Glycyl lysine isopeptide (Lys-Gly) (interchain with G-Cter in SUMO2) cross-link involves residue Lys-186. 2 positions are modified to phosphoserine: Ser-209 and Ser-210. 2 stretches are compositionally biased toward acidic residues: residues 209–230 and 341–360; these read SSDDDETEEGEVEDENSSDVEL and EPIEEEEEEEEEEEDQDMDA. Residues 361–383 show a composition bias toward basic and acidic residues; sequence DDRVVVEYHEELPGLKQPRERSL. Residue Thr-408 is modified to Phosphothreonine. Ser-410 bears the Phosphoserine mark. Disordered stretches follow at residues 430 to 454 and 467 to 615; these read SIRNPMRADSISTSNIKNRIGNKLP and EKRQ…EAES. A compositionally biased stretch (basic and acidic residues) spans 506-516; it reads VRREPSSDVHS. A Glycyl lysine isopeptide (Lys-Gly) (interchain with G-Cter in SUMO2) cross-link involves residue Lys-536. Basic and acidic residues-rich tracts occupy residues 549-564 and 580-593; these read KTKEKNTKKVDHRASG and IKEKEESRQKKSRL. Position 563 is a phosphoserine (Ser-563). The span at 606 to 615 shows a compositional bias: low complexity; it reads ESSSGSEAES. Ser-615 is subject to Phosphoserine.

It belongs to the NCBP3 family. In terms of assembly, component of an alternative cap-binding complex (CBC) composed of NCBP1/CBP80 and NCBP3. Interacts with SRRT, KPNA3, THOC5 and EIF4A3.

The protein localises to the nucleus. It is found in the cytoplasm. Its function is as follows. Associates with NCBP1/CBP80 to form an alternative cap-binding complex (CBC) which plays a key role in mRNA export. NCBP3 serves as adapter protein linking the capped RNAs (m7GpppG-capped RNA) to NCBP1/CBP80. Unlike the conventional CBC with NCBP2 which binds both small nuclear RNA (snRNA) and messenger (mRNA) and is involved in their export from the nucleus, the alternative CBC with NCBP3 does not bind snRNA and associates only with mRNA thereby playing a role in only mRNA export. The alternative CBC is particularly important in cellular stress situations such as virus infections and the NCBP3 activity is critical to inhibit virus growth. This Mus musculus (Mouse) protein is Nuclear cap-binding protein subunit 3.